Here is a 346-residue protein sequence, read N- to C-terminus: MNPHAKLISIMSLALGTSITISSNHWILAWTGLEINTLAIIPLISKSHHPRAIEAAIKYFLTQSTASALILFSSMNNAWSTGQWDITQLNHPTSCLILTMAIAIKLGLVPFHFWFPEVLQGSSLITALLLSTLMKLPPMTLLLMTSQSLNPALLTLLAVSSALVGGWMGLNQTQTRKILAFSSISHLGWMIVIIIYNPKLTILTFIIYSLMTSTVFLSLSQIKVLKLSTMLISWTKTPMLNSTIMVTLLSLAGLPPLTGFMPKWLIIQELTKQEMTPVATTIAMLSLLGLFFYLRLAYHSTITLPPNSSNHMKLWRINTTPNTPTAILTVLSISLLPLSPLITTLV.

The next 10 membrane-spanning stretches (helical) occupy residues 25 to 45 (HWILAWTGLEINTLAIIPLIS), 52 to 72 (AIEAAIKYFLTQSTASALILF), 95 to 115 (CLILTMAIAIKLGLVPFHFWF), 124 to 144 (LITALLLSTLMKLPPMTLLLM), 149 to 169 (LNPALLTLLAVSSALVGGWMG), 178 to 196 (ILAFSSISHLGWMIVIIIY), 200 to 219 (LTILTFIIYSLMTSTVFLSL), 247 to 267 (TLLSLAGLPPLTGFMPKWLII), 274 to 294 (EMTPVATTIAMLSLLGLFFYL), and 326 to 346 (AILTVLSISLLPLSPLITTLV).

This sequence belongs to the complex I subunit 2 family.

It localises to the mitochondrion inner membrane. The enzyme catalyses a ubiquinone + NADH + 5 H(+)(in) = a ubiquinol + NAD(+) + 4 H(+)(out). In terms of biological role, core subunit of the mitochondrial membrane respiratory chain NADH dehydrogenase (Complex I) that is believed to belong to the minimal assembly required for catalysis. Complex I functions in the transfer of electrons from NADH to the respiratory chain. The immediate electron acceptor for the enzyme is believed to be ubiquinone. The sequence is that of NADH-ubiquinone oxidoreductase chain 2 (MT-ND2) from Coturnix japonica (Japanese quail).